The chain runs to 348 residues: Putative methylthioribose-1-phosphate isomerase (348 aa).

Residues 55-57 (RGA), Arg-98, and Gln-203 each bind substrate. Residue Asp-244 is the Proton donor of the active site. 253 to 254 (NK) is a substrate binding site.

This sequence belongs to the eIF-2B alpha/beta/delta subunits family. MtnA subfamily.

The catalysed reaction is 5-(methylsulfanyl)-alpha-D-ribose 1-phosphate = 5-(methylsulfanyl)-D-ribulose 1-phosphate. In terms of biological role, catalyzes the interconversion of methylthioribose-1-phosphate (MTR-1-P) into methylthioribulose-1-phosphate (MTRu-1-P). The sequence is that of Putative methylthioribose-1-phosphate isomerase from Methanosarcina acetivorans (strain ATCC 35395 / DSM 2834 / JCM 12185 / C2A).